Reading from the N-terminus, the 568-residue chain is Acyl-CoA ligase gloD (568 aa).

ATP is bound by residues 211 to 219 (TSGTSGFLK), 352 to 357 (PGYGLT), aspartate 436, arginine 455, and lysine 553. The tract at residues 282–352 (DMQIALKSVQ…QLCPEWEINP (71 aa)) is SBD1. The segment at 353-415 (GYGLTESFVC…VRSPSVMKEY (63 aa)) is SBD2.

The protein belongs to the ATP-dependent AMP-binding enzyme family.

Its pathway is mycotoxin biosynthesis. In terms of biological role, acyl-CoA ligase; part of the gene cluster that mediates the biosynthesis of pneumocandins, lipohexapeptides of the echinocandin family that prevent fungal cell wall formation by non-competitive inhibition of beta-1,3-glucan synthase. The 10,12-dimethylmyristoyl side chain is synthesized by the reducing polyketide synthase gloL/GLPKS4. The thioesterase gloN/GLHYD exclusively interacts with gloL/GLPKS4 to maintain turnover of the polyketide side chain. The 10R,12S-dimethylmyristic acid is then transferred to the first thiolation domain of the nonribosomal peptide synthetase gloA/GLNRPS4 by the acyl-AMP ligase gloD/GLligase, followed by its acylation to L-ornithine to trigger elongation of the cyclic hexapeptide. L-ornithine, 4R-hydroxyl-L-proline (generated from L-proline by the dioxygenase gloF/GLOXY2), 3S-hydroxyl-L-homotyrosine (generated by gloG/GLHtyB, gloH/GLHtyA, gloI/GLHtyC, gloJ/GLHtyD and hydroxylated at C-3 by the dioxygenase gloM/GLOXY1), 3R-hydroxyl-L-glutamine (generated from L-glutamine probably by the dioxygenase gloE/GLOXY3) and 3S-hydroxyl-L-proline (generated from L-proline by the dioxygenase gloF/GLOXY2 to yield pneumocandin B0), or 3S-hydroxyl-4S-methyl-L-proline (generated from L-leucine by the dioxygenase gloC/GLOXY4 to yield pneumocandin A0) are sequentially added to the growing chain. The last C domain of gloA/GLNRPS4 is proposed to be responsible for cyclization by condensation to form the peptide bond between L-ornithine and 3S-hydroxyl-4S-methyl-L-proline (for pneumocandin A0) or 3S-hydroxyl-L-proline (for pneumocandin B0). Finally, the subsequent C-4 hydroxylation of 3S-hydroxyl-L-homotyrosine and L-ornithine dihydroxylation at C-4 and C-5 are performed by the cytochrome P450 monooxygenases gloP/GLP450-1 and gloO/GLP450-2, respectively. This chain is Acyl-CoA ligase gloD, found in Glarea lozoyensis (strain ATCC 20868 / MF5171).